Consider the following 470-residue polypeptide: Uronate isomerase (470 aa).

The protein belongs to the metallo-dependent hydrolases superfamily. Uronate isomerase family.

It catalyses the reaction D-glucuronate = D-fructuronate. It carries out the reaction aldehydo-D-galacturonate = keto-D-tagaturonate. It participates in carbohydrate metabolism; pentose and glucuronate interconversion. In Cutibacterium acnes (strain DSM 16379 / KPA171202) (Propionibacterium acnes), this protein is Uronate isomerase.